A 437-amino-acid chain; its full sequence is MYGNNNKKSINITSMFQNLIPEGSDIFSRRCIWVNGPVIVGAGPSGLAVAAGLKREGVPFIILERANCIASLWQNRTYDRLKLHLPKQFCQLPNYPFPDEFPEYPTKFQFIQYLESYAANFDINPKFNETVQSAKYDETFGLWRVKTISNMGQLGSCEFEYICRWIVVATGENAEKVVPDFEGLEDFGGDVLHAGDYKSGGRYQGKKVLVVGCGNSGMEVSLDLYNHGANPSMVVRSAVHVLPREIFGKSTFELGVTMMKYMPVWLADKTILFLARIILGNTDKYGLKRPKIGPLELKNKEGKTPVLDIGALPKIRSGKIKIVPGIIKFGKGKVELIDGRVLEIDSVILATGYRSNVPSWLKDNDFFSDDGIPKNPFPNGWKGEAGLYAVGFTRKGLFGASLDAMSVAHDIANRWKEESKQQKKTAAARHRRCISHF.

Residue 41–46 coordinates FAD; sequence GAGPSG. 212–217 contributes to the NADP(+) binding site; it reads GCGNSG.

Belongs to the FMO family. Requires FAD as cofactor.

It catalyses the reaction indole-3-pyruvate + NADPH + O2 + H(+) = (indol-3-yl)acetate + CO2 + NADP(+) + H2O. The protein operates within plant hormone metabolism; auxin biosynthesis. Involved in auxin biosynthesis. Belongs to the set of redundant YUCCA genes probably responsible for auxin biosynthesis in roots. The protein is Probable indole-3-pyruvate monooxygenase YUCCA3 (YUC3) of Arabidopsis thaliana (Mouse-ear cress).